Reading from the N-terminus, the 227-residue chain is Ribonuclease 3 (227 aa).

The RNase III domain occupies 5–127; sequence LNALQLRLQH…LIGAVYLDAG (123 aa). Mg(2+) is bound at residue E40. Residue D44 is part of the active site. Mg(2+)-binding residues include D113 and E116. Residue E116 is part of the active site. The DRBM domain occupies 154–224; that stretch reads DAKTALQEWL…ATAMLELLKA (71 aa).

The protein belongs to the ribonuclease III family. In terms of assembly, homodimer. Mg(2+) is required as a cofactor.

It localises to the cytoplasm. It catalyses the reaction Endonucleolytic cleavage to 5'-phosphomonoester.. Functionally, digests double-stranded RNA. Involved in the processing of primary rRNA transcript to yield the immediate precursors to the large and small rRNAs (23S and 16S). Processes some mRNAs, and tRNAs when they are encoded in the rRNA operon. Processes pre-crRNA and tracrRNA of type II CRISPR loci if present in the organism. In Delftia acidovorans (strain DSM 14801 / SPH-1), this protein is Ribonuclease 3.